The chain runs to 368 residues: Chaperone protein DnaJ (368 aa).

The region spanning 5–69 is the J domain; it reads DYYEVLGVAR…NQRARYDQFG (65 aa). Residues 125–207 form a CR-type zinc finger; the sequence is GVEKVITIPV…CRGAGRVRKN (83 aa). Zn(2+) contacts are provided by Cys138, Cys141, Cys155, Cys158, Cys181, Cys184, Cys195, and Cys198. 4 CXXCXGXG motif repeats span residues 138–145, 155–162, 181–188, and 195–202; these read CGTCHGSG, CKRCGGSG, CSTCHGRG, and CETCRGAG.

This sequence belongs to the DnaJ family. In terms of assembly, homodimer. It depends on Zn(2+) as a cofactor.

The protein localises to the cytoplasm. In terms of biological role, participates actively in the response to hyperosmotic and heat shock by preventing the aggregation of stress-denatured proteins and by disaggregating proteins, also in an autonomous, DnaK-independent fashion. Unfolded proteins bind initially to DnaJ; upon interaction with the DnaJ-bound protein, DnaK hydrolyzes its bound ATP, resulting in the formation of a stable complex. GrpE releases ADP from DnaK; ATP binding to DnaK triggers the release of the substrate protein, thus completing the reaction cycle. Several rounds of ATP-dependent interactions between DnaJ, DnaK and GrpE are required for fully efficient folding. Also involved, together with DnaK and GrpE, in the DNA replication of plasmids through activation of initiation proteins. This Exiguobacterium sibiricum (strain DSM 17290 / CCUG 55495 / CIP 109462 / JCM 13490 / 255-15) protein is Chaperone protein DnaJ.